A 362-amino-acid chain; its full sequence is 3-dehydroquinate synthase (362 aa).

NAD(+) contacts are provided by residues Asp71–Lys76, Gly105–Asp109, Thr129–Thr130, Lys142, Lys151, and Cys169–Thr172. Zn(2+) is bound by residues Glu184, His247, and His264.

Belongs to the sugar phosphate cyclases superfamily. Dehydroquinate synthase family. It depends on Co(2+) as a cofactor. Zn(2+) serves as cofactor. The cofactor is NAD(+).

The protein resides in the cytoplasm. The catalysed reaction is 7-phospho-2-dehydro-3-deoxy-D-arabino-heptonate = 3-dehydroquinate + phosphate. It functions in the pathway metabolic intermediate biosynthesis; chorismate biosynthesis; chorismate from D-erythrose 4-phosphate and phosphoenolpyruvate: step 2/7. Catalyzes the conversion of 3-deoxy-D-arabino-heptulosonate 7-phosphate (DAHP) to dehydroquinate (DHQ). The sequence is that of 3-dehydroquinate synthase from Shigella dysenteriae serotype 1 (strain Sd197).